Consider the following 234-residue polypeptide: Ribose-5-phosphate isomerase A (234 aa).

Substrate is bound by residues 35–38 (SGTT), 91–94 (DGAD), and 105–108 (KGGG). Glutamate 114 (proton acceptor) is an active-site residue. Lysine 132 provides a ligand contact to substrate.

The protein belongs to the ribose 5-phosphate isomerase family. In terms of assembly, homodimer.

The catalysed reaction is aldehydo-D-ribose 5-phosphate = D-ribulose 5-phosphate. Its pathway is carbohydrate degradation; pentose phosphate pathway; D-ribose 5-phosphate from D-ribulose 5-phosphate (non-oxidative stage): step 1/1. Its function is as follows. Catalyzes the reversible conversion of ribose-5-phosphate to ribulose 5-phosphate. The protein is Ribose-5-phosphate isomerase A of Methanococcus aeolicus (strain ATCC BAA-1280 / DSM 17508 / OCM 812 / Nankai-3).